A 1143-amino-acid chain; its full sequence is uncharacterized protein (1143 aa).

A signal peptide spans methionine 1–glycine 20. Residues asparagine 21–alanine 1121 are Extracellular-facing. The span at asparagine 177–glycine 203 shows a compositional bias: gly residues. Positions asparagine 177 to serine 1120 are disordered. Positions serine 222–tryptophan 236 are enriched in low complexity. The span at serine 237–serine 283 shows a compositional bias: gly residues. Over residues serine 284–glycine 296 the composition is skewed to low complexity. The segment covering serine 297–serine 330 has biased composition (gly residues). A compositionally biased stretch (low complexity) spans serine 331–tryptophan 368. The segment covering glycine 374 to serine 392 has biased composition (gly residues). Residues serine 393–glycine 403 are compositionally biased toward low complexity. Gly residues-rich tracts occupy residues glycine 404–serine 418 and glycine 430–serine 444. Composition is skewed to low complexity over residues serine 445 to glycine 498 and glycine 506 to aspartate 541. Gly residues-rich tracts occupy residues glycine 555 to serine 573, glycine 580 to serine 596, glycine 604 to serine 622, glycine 629 to serine 783, glycine 790 to serine 843, and glycine 851 to serine 905. The span at glycine 906–asparagine 1059 shows a compositional bias: low complexity. Polar residues predominate over residues serine 1062–aspartate 1078. The span at proline 1094 to alanine 1114 shows a compositional bias: low complexity. A helical transmembrane segment spans residues isoleucine 1122–valine 1142. Position 1143 (isoleucine 1143) is a topological domain, cytoplasmic.

Its subcellular location is the membrane. This is an uncharacterized protein from Dictyostelium discoideum (Social amoeba).